The chain runs to 205 residues: uncharacterized protein (205 aa).

The next 4 helical transmembrane spans lie at 18–38, 69–89, 106–126, and 127–147; these read ATVN…GTIG, LGIF…CFYA, VVWI…YYIM, and LLHP…LFLI.

It is found in the mitochondrion membrane. This is an uncharacterized protein from Arabidopsis thaliana (Mouse-ear cress).